A 672-amino-acid polypeptide reads, in one-letter code: MKRINILNEDTANKIAAGEVVERPASVVKELVENAIDANSKNILIEIEEGGSSLIRIIDDGDGIYKEDIEKAFLPHATSKIKESEDIYSINTLGFRGEALPSIASVARVNLKTKQETEECGYEITIEGGKFSEVTECGVNKGTIMEVRDLFFNVPARKKFLKTTSKESSLINDIITRIALSNPNISFKLFNNGKKIIHTYGNGNMKDVIRTIYGKSIVENVLYFEDTSDIATIYGYVGKEAIARGSRNNQSIFVNSRYIKNRSLGIAVEQAFKSFSTVSKFPFFILFIEIYPEYIDVNIHPTKSEVKFNDERFIFKKIFGAVHTSLKEEVFSTFSIPEEVNEAISKNTNLNIEEITFKIEEEQEKVKFNTNHLSQKNICSTQGNNSINKHIYDEKHKTDTNIPLNVNIPVDLKSDHIKLEDDNNSIPNKEVICDNNEVKYESSYTSDSNQYENSCKSDVDKESKSKTTGTSELVKEKIPKFPAIKIIGQYNKTYILGEYAGTLYMIDQHAAHEKIMFEKYLNDIICGDIIIQPLMIPTVIDLSMDDYSYFEENKDVFKEAGFTIEDFGGTSIALKEVPYFLGKLKPKNLFLEILDNLKNLGSGKTTEVKYNAIATKACKSAVKGNDSLDELEMVKLIEELRYIDDPFHCPHGRPTIIQFTSTDIDKKFRRIV.

A compositionally biased stretch (polar residues) spans 443-454 (SYTSDSNQYENS). The segment at 443–469 (SYTSDSNQYENSCKSDVDKESKSKTTG) is disordered. Residues 455-465 (CKSDVDKESKS) show a composition bias toward basic and acidic residues.

Belongs to the DNA mismatch repair MutL/HexB family.

This protein is involved in the repair of mismatches in DNA. It is required for dam-dependent methyl-directed DNA mismatch repair. May act as a 'molecular matchmaker', a protein that promotes the formation of a stable complex between two or more DNA-binding proteins in an ATP-dependent manner without itself being part of a final effector complex. The polypeptide is DNA mismatch repair protein MutL (Clostridium botulinum (strain Eklund 17B / Type B)).